We begin with the raw amino-acid sequence, 426 residues long: Serine--tRNA ligase (426 aa).

233–235 lines the L-serine pocket; it reads TAE. Position 264–266 (264–266) interacts with ATP; it reads RSE. L-serine is bound at residue E287. 351 to 354 is a binding site for ATP; that stretch reads EISS. Residue S387 coordinates L-serine.

Belongs to the class-II aminoacyl-tRNA synthetase family. Type-1 seryl-tRNA synthetase subfamily. As to quaternary structure, homodimer. The tRNA molecule binds across the dimer.

The protein resides in the cytoplasm. It catalyses the reaction tRNA(Ser) + L-serine + ATP = L-seryl-tRNA(Ser) + AMP + diphosphate + H(+). It carries out the reaction tRNA(Sec) + L-serine + ATP = L-seryl-tRNA(Sec) + AMP + diphosphate + H(+). Its pathway is aminoacyl-tRNA biosynthesis; selenocysteinyl-tRNA(Sec) biosynthesis; L-seryl-tRNA(Sec) from L-serine and tRNA(Sec): step 1/1. Functionally, catalyzes the attachment of serine to tRNA(Ser). Is also able to aminoacylate tRNA(Sec) with serine, to form the misacylated tRNA L-seryl-tRNA(Sec), which will be further converted into selenocysteinyl-tRNA(Sec). In Pseudomonas aeruginosa (strain LESB58), this protein is Serine--tRNA ligase.